The primary structure comprises 185 residues: Elongation factor P (185 aa).

The protein belongs to the elongation factor P family.

It is found in the cytoplasm. It functions in the pathway protein biosynthesis; polypeptide chain elongation. Involved in peptide bond synthesis. Stimulates efficient translation and peptide-bond synthesis on native or reconstituted 70S ribosomes in vitro. Probably functions indirectly by altering the affinity of the ribosome for aminoacyl-tRNA, thus increasing their reactivity as acceptors for peptidyl transferase. This chain is Elongation factor P, found in Nitratidesulfovibrio vulgaris (strain DSM 19637 / Miyazaki F) (Desulfovibrio vulgaris).